Consider the following 117-residue polypeptide: Small ribosomal subunit protein bS6 (117 aa).

A disordered region spans residues 96–117 (HAEGPSVQMQKRDERDNRRERR). The span at 105 to 117 (QKRDERDNRRERR) shows a compositional bias: basic and acidic residues.

This sequence belongs to the bacterial ribosomal protein bS6 family.

Binds together with bS18 to 16S ribosomal RNA. This Ruegeria sp. (strain TM1040) (Silicibacter sp.) protein is Small ribosomal subunit protein bS6.